The chain runs to 144 residues: Large ribosomal subunit protein uL16 (144 aa).

The protein belongs to the universal ribosomal protein uL16 family. In terms of assembly, part of the 50S ribosomal subunit.

Binds 23S rRNA and is also seen to make contacts with the A and possibly P site tRNAs. The polypeptide is Large ribosomal subunit protein uL16 (Listeria innocua serovar 6a (strain ATCC BAA-680 / CLIP 11262)).